We begin with the raw amino-acid sequence, 308 residues long: tRNA pseudouridine synthase B (308 aa).

The active-site Nucleophile is the D44.

This sequence belongs to the pseudouridine synthase TruB family. Type 1 subfamily.

It catalyses the reaction uridine(55) in tRNA = pseudouridine(55) in tRNA. In terms of biological role, responsible for synthesis of pseudouridine from uracil-55 in the psi GC loop of transfer RNAs. In Bdellovibrio bacteriovorus (strain ATCC 15356 / DSM 50701 / NCIMB 9529 / HD100), this protein is tRNA pseudouridine synthase B.